Reading from the N-terminus, the 34-residue chain is Cytochrome b6-f complex subunit 7 (34 aa).

The chain crosses the membrane as a helical span at residues 9 to 27 (AILSFGLIFVGWGLGALLL).

This sequence belongs to the PetM family. In terms of assembly, the 4 large subunits of the cytochrome b6-f complex are cytochrome b6, subunit IV (17 kDa polypeptide, PetD), cytochrome f and the Rieske protein, while the 4 small subunits are PetG, PetL, PetM and PetN. The complex functions as a dimer.

Its subcellular location is the cellular thylakoid membrane. Functionally, component of the cytochrome b6-f complex, which mediates electron transfer between photosystem II (PSII) and photosystem I (PSI), cyclic electron flow around PSI, and state transitions. The sequence is that of Cytochrome b6-f complex subunit 7 from Nostoc punctiforme (strain ATCC 29133 / PCC 73102).